The primary structure comprises 222 residues: MSEKQKAVAAQERVTISKRDPWALKKWFSVYAPSYLGGVFLAEVPASEPQKLLLRTLEVSLFDITKDLSHLPIKLRFQIHKVDGLKAITRFKGLELTRDYIRSLVRKGTSKVSAIVEVKTKDGWVMRIAVLAITTHRIGSAQKSAMRKRMFDVLTRKASEMDIGQFLKEVLEGLLTADLFVAGKKIAPLRKVEIAKIKVLKYPPEEEQTTVKELTTETVAAS.

It belongs to the eukaryotic ribosomal protein eS1 family.

This is Small ribosomal subunit protein eS1 from Pyrobaculum islandicum (strain DSM 4184 / JCM 9189 / GEO3).